Here is a 375-residue protein sequence, read N- to C-terminus: Mitogen-activated protein kinase 4a (375 aa).

One can recognise a Protein kinase domain in the interval 39–325 (KPPLRPIGRG…VEAALAHPYL (287 aa)). ATP contacts are provided by residues 45–53 (IGRGAYGIV) and K68. D165 functions as the Proton acceptor in the catalytic mechanism. Phosphothreonine is present on T197. The TXY motif lies at 197-199 (TEY). Y199 bears the Phosphotyrosine mark.

It belongs to the protein kinase superfamily. CMGC Ser/Thr protein kinase family. MAP kinase subfamily. The cofactor is Mg(2+). In terms of processing, dually phosphorylated on Thr-197 and Tyr-199, which activates the enzyme. Phosphorylated in response to pathogen-associated molecular pattern (PAMP) chitin and in response to necrotrophic fungus B.cinerea spores. Not phosphorylated in response to osmotic stress. In terms of tissue distribution, expressed strongly in the apical cells of caulonemal air filaments and rhizoids in fully developed plants and less strongly, but readily detectable in filamentous protonemal tissue at the edge of the plant consisting of both chloronema and caulonema. When filamentous growth of protonema is promoted, the expression is strongest in newly formed apical tip cells of protonemal tissue.

It localises to the cytoplasm. It is found in the nucleus. The catalysed reaction is L-seryl-[protein] + ATP = O-phospho-L-seryl-[protein] + ADP + H(+). It carries out the reaction L-threonyl-[protein] + ATP = O-phospho-L-threonyl-[protein] + ADP + H(+). Its activity is regulated as follows. Activated by threonine and tyrosine phosphorylation. Activated in response to bacterial and fungal pathogen-associated molecular patterns (PAMPs) including chitin, chitosan and peptidyl glycans (PGNs). Activation in response to chitin requires the CERK1, MEKK1a/b, MKK1a/b/c and MPK4a/b signaling pathway. Activated in response to necrotrophic fungus B.cinerea spores. Not activated in response to osmotic stress. Its function is as follows. The CERK1, MEKK1a/b, MKK1a/b/c and MPK4a/b proteins are involved in pathogen defense. The pathway induces rapid growth inhibition, cell wall depositions and accumulation of defense-related transcripts. This protein is required for innate immunity triggered by pathogen-associated molecular patterns (PAMPs). Involved in resistance to necrotrophic fungi B.cinerea and A.brassicicola. Involved in the transduction of signals from chitosan perception to the activation of defense genes. The chain is Mitogen-activated protein kinase 4a (MPK4a) from Physcomitrium patens (Spreading-leaved earth moss).